The following is a 511-amino-acid chain: Steroid 17-alpha-hydroxylase/17,20 lyase (511 aa).

Cysteine 442 lines the heme pocket.

Belongs to the cytochrome P450 family. The cofactor is heme.

It is found in the endoplasmic reticulum membrane. It localises to the microsome membrane. It catalyses the reaction a C21-steroid + reduced [NADPH--hemoprotein reductase] + O2 = a 17alpha-hydroxy-C21-steroid + oxidized [NADPH--hemoprotein reductase] + H2O + H(+). It carries out the reaction progesterone + reduced [NADPH--hemoprotein reductase] + O2 = 17alpha-hydroxyprogesterone + oxidized [NADPH--hemoprotein reductase] + H2O + H(+). The enzyme catalyses pregnenolone + reduced [NADPH--hemoprotein reductase] + O2 = 17alpha-hydroxypregnenolone + oxidized [NADPH--hemoprotein reductase] + H2O + H(+). The catalysed reaction is 17alpha-hydroxyprogesterone + reduced [NADPH--hemoprotein reductase] + O2 = androst-4-ene-3,17-dione + acetate + oxidized [NADPH--hemoprotein reductase] + H2O + 2 H(+). It catalyses the reaction 17alpha-hydroxyprogesterone + reduced [NADPH--hemoprotein reductase] + O2 = 16alpha,17alpha-dihydroxyprogesterone + oxidized [NADPH--hemoprotein reductase] + H2O + H(+). It carries out the reaction 16alpha,17alpha-dihydroxyprogesterone + reduced [NADPH--hemoprotein reductase] + O2 = 6beta,16alpha,17alpha-trihydroxyprogesterone + oxidized [NADPH--hemoprotein reductase] + H2O + H(+). The enzyme catalyses 17alpha-hydroxypregnenolone + reduced [NADPH--hemoprotein reductase] + O2 = 3beta-hydroxyandrost-5-en-17-one + acetate + oxidized [NADPH--hemoprotein reductase] + H2O + 2 H(+). The catalysed reaction is 16alpha,17alpha-dihydroxypregnenolone + reduced [NADPH--hemoprotein reductase] + O2 = 3beta,16alpha-dihydroxy-androst-5-en-17-one + acetate + oxidized [NADPH--hemoprotein reductase] + H2O + 2 H(+). It catalyses the reaction 3beta-hydroxyandrost-5-en-17-one + reduced [NADPH--hemoprotein reductase] + O2 = 3beta,16alpha-dihydroxy-androst-5-en-17-one + oxidized [NADPH--hemoprotein reductase] + H2O + H(+). It carries out the reaction androst-4-ene-3,17-dione + reduced [NADPH--hemoprotein reductase] + O2 = 16alpha-hydroxyandrost-4-ene-3,17-dione + oxidized [NADPH--hemoprotein reductase] + H2O + H(+). It functions in the pathway steroid hormone biosynthesis. It participates in steroid biosynthesis; glucocorticoid biosynthesis. Regulated predominantly by intracellular cAMP levels. The 17,20-lyase activity is stimulated by cytochrome b5, which acts as an allosteric effector increasing the Vmax of the lyase activity. Its function is as follows. A cytochrome P450 monooxygenase involved in corticoid and androgen biosynthesis. Catalyzes 17-alpha hydroxylation of C21 steroids, which is common for both pathways. A second oxidative step, required only for androgen synthesis, involves an acyl-carbon cleavage. The 17-alpha hydroxy intermediates, as part of adrenal glucocorticoids biosynthesis pathway, are precursors of cortisol. Hydroxylates steroid hormones, pregnenolone and progesterone to form 17-alpha hydroxy metabolites, followed by the cleavage of the C17-C20 bond to form C19 steroids, dehydroepiandrosterone (DHEA) and androstenedione. Has 16-alpha hydroxylase activity. Catalyzes 16-alpha hydroxylation of 17-alpha hydroxy pregnenolone, followed by the cleavage of the C17-C20 bond to form 16-alpha-hydroxy DHEA. Also 16-alpha hydroxylates androgens, relevant for estriol synthesis. Mechanistically, uses molecular oxygen inserting one oxygen atom into a substrate, and reducing the second into a water molecule, with two electrons provided by NADPH via cytochrome P450 reductase (CPR; NADPH-ferrihemoprotein reductase). This is Steroid 17-alpha-hydroxylase/17,20 lyase (CYP17A1) from Mesocricetus auratus (Golden hamster).